The primary structure comprises 63 residues: uncharacterized protein (63 aa).

This is an uncharacterized protein from Thermoproteus tenax (TTV1).